Here is a 467-residue protein sequence, read N- to C-terminus: MSSILPFTPPVVKRLLGWKKSAGGSGGAGGGEQNGQEEKWCEKAVKSLVKKLKKTGRLDELEKAITTQNCNTKCVTIPSTCSEIWGLSTPNTIDQWDTTGLYSFSEQTRSLDGRLQVSHRKGLPHVIYCRLWRWPDLHSHHELKAIENCEYAFNLKKDEVCVNPYHYQRVETPVLPPVLVPRHTEILTELPPLDDYTHSIPENTNFPAGIEPQSNYIPETPPPGYISEDGETSDQQLNQSMDTGSPAELSPTTLSPVNHSLDLQPVTYSEPAFWCSIAYYELNQRVGETFHASQPSLTVDGFTDPSNSERFCLGLLSNVNRNATVEMTRRHIGRGVRLYYIGGEVFAECLSDSAIFVQSPNCNQRYGWHPATVCKIPPGCNLKIFNNQEFAALLAQSVNQGFEAVYQLTRMCTIRMSFVKGWGAEYRRQTVTSTPCWIELHLNGPLQWLDKVLTQMGSPSVRCSSMS.

Ser-2 is modified (N-acetylserine). Thr-8 is modified (phosphothreonine; by MAPK3). The MH1 domain maps to 10–176 (PVVKRLLGWK…YQRVETPVLP (167 aa)). Lys-19 carries the post-translational modification N6-acetyllysine. Residues Cys-74, Cys-149, Cys-161, and His-166 each contribute to the Zn(2+) site. A compositionally biased stretch (polar residues) spans 207-217 (PAGIEPQSNYI). Residues 207 to 251 (PAGIEPQSNYIPETPPPGYISEDGETSDQQLNQSMDTGSPAELSP) are disordered. Thr-220 is modified (phosphothreonine). The short motif at 221–225 (PPPGY) is the PY-motif element. Residues 233 to 243 (SDQQLNQSMDT) show a composition bias toward polar residues. Residue Ser-240 is modified to Phosphoserine; by CAMK2. A phosphoserine mark is found at Ser-245, Ser-250, Ser-255, Ser-458, Ser-460, and Ser-464. Positions 274 to 467 (WCSIAYYELN…SPSVRCSSMS (194 aa)) constitute an MH2 domain. Ser-465 and Ser-467 each carry phosphoserine; by TGFBR1.

This sequence belongs to the dwarfin/SMAD family. As to quaternary structure, monomer; in the absence of TGF-beta. Heterodimer; in the presence of TGF-beta. Forms a heterodimer with co-SMAD, SMAD4, in the nucleus to form the transactivation complex SMAD2/SMAD4. Found in a complex with SMAD3 and TRIM33 upon addition of TGF-beta. Identified in a complex that contains at least ZNF451, SMAD2, SMAD3 and SMAD4. Interacts (via the MH2 domain) with ZFYVE9; may form trimers with the SMAD4 co-SMAD. Interacts with TAZ/WWRT1. Interacts with FOXH1. Interacts with SNW1. Interacts with CREB-binding protein (CBP) and EP300. Interacts with SNON. Interacts with ALK4/ACVR1B. Interacts with SKOR1. Interacts with SKOR2. Interacts with PRDM16. Interacts (via MH2 domain) with LEMD3. Interacts with RBPMS. Interacts with WWP1. Interacts (dephosphorylated form, via the MH1 and MH2 domains) with RANBP3 (via its C-terminal R domain); the interaction results in the export of dephosphorylated SMAD3 out of the nucleus and termination of the TGF-beta signaling. Interacts with PDPK1 (via PH domain). Interacts with DAB2; the interactions are enhanced upon TGF-beta stimulation. Interacts with USP15. Interacts with PPP5C. Interacts with LDLRAD4 (via the SMAD interaction motif). Interacts (via MH2 domain) with PMEPA1 (via the SMAD interaction motif). Interacts with ZFHX3. Interacts with ZNF451. Interacts with SMURF2 when phosphorylated on Ser-465/467. Interacts with PPM1A. Interacts with TGF-beta. Interacts with TGFBR1. Interacts with TGIF. Interacts with SMAD3 and TRIM33. Interacts with ZNF580. Interacts with NEDD4L in response to TGF-beta. Interacts with HGS. Interacts with AIP1. Interacts with WWP1. Interacts with PML. Interacts weakly with ZNF8. Interacts (when phosphorylated) with RNF111; RNF111 acts as an enhancer of the transcriptional responses by mediating ubiquitination and degradation of SMAD2 inhibitors. Interacts with YAP1 (when phosphorylated at 'Ser-127'). Interacts when phosphorylated with IPO7; the interaction facilitates translocation of SMAD2 to the nucleus. Interacts with MTMR4; negatively regulates TGF-beta signaling through SMAD2 dephosphorylation and retention in endosomes. Post-translationally, phosphorylated on one or several of Thr-220, Ser-245, Ser-250, and Ser-255. In response to TGF-beta, phosphorylated on Ser-465/467 by TGF-beta and activin type 1 receptor kinases. TGF-beta-induced Ser-465/467 phosphorylation declines progressively in a KMT5A-dependent manner. Able to interact with SMURF2 when phosphorylated on Ser-465/467, recruiting other proteins, such as SNON, for degradation. In response to decorin, the naturally occurring inhibitor of TGF-beta signaling, phosphorylated on Ser-240 by CaMK2. Phosphorylated by MAPK3 upon EGF stimulation; which increases transcriptional activity and stability, and is blocked by calmodulin. Phosphorylated by PDPK1. In terms of processing, in response to TGF-beta, ubiquitinated by NEDD4L; which promotes its degradation. Monoubiquitinated, leading to prevent DNA-binding. Deubiquitination by USP15 alleviates inhibition and promotes activation of TGF-beta target genes. Ubiquitinated by RNF111, leading to its degradation: only SMAD2 proteins that are 'in use' are targeted by RNF111, RNF111 playing a key role in activating SMAD2 and regulating its turnover. Acetylated on Lys-19 by coactivators in response to TGF-beta signaling, which increases transcriptional activity. Isoform short: Acetylation increases DNA binding activity in vitro and enhances its association with target promoters in vivo. Acetylation in the nucleus by EP300 is enhanced by TGF-beta. Expressed at high levels in skeletal muscle, endothelial cells, heart and placenta.

It is found in the cytoplasm. The protein resides in the nucleus. Its function is as follows. Receptor-regulated SMAD (R-SMAD) that is an intracellular signal transducer and transcriptional modulator activated by TGF-beta (transforming growth factor) and activin type 1 receptor kinases. Binds the TRE element in the promoter region of many genes that are regulated by TGF-beta and, on formation of the SMAD2/SMAD4 complex, activates transcription. Promotes TGFB1-mediated transcription of odontoblastic differentiation genes in dental papilla cells. Positively regulates PDPK1 kinase activity by stimulating its dissociation from the 14-3-3 protein YWHAQ which acts as a negative regulator. May act as a tumor suppressor in colorectal carcinoma. In Homo sapiens (Human), this protein is Mothers against decapentaplegic homolog 2 (SMAD2).